Here is a 230-residue protein sequence, read N- to C-terminus: N-(5'-phosphoribosyl)anthranilate isomerase (230 aa).

It belongs to the TrpF family.

It catalyses the reaction N-(5-phospho-beta-D-ribosyl)anthranilate = 1-(2-carboxyphenylamino)-1-deoxy-D-ribulose 5-phosphate. It participates in amino-acid biosynthesis; L-tryptophan biosynthesis; L-tryptophan from chorismate: step 3/5. The protein is N-(5'-phosphoribosyl)anthranilate isomerase of Ralstonia nicotianae (strain ATCC BAA-1114 / GMI1000) (Ralstonia solanacearum).